The sequence spans 311 residues: MGFPRGDVLSILDYSRENLEYLFLVADQMEKYLSEKKKLHLLDGYIVALAFLEPSTRTMYSFQSATYRLGGKTLVFTSETATSLAKGENFADTIRMLDSYSDLIVIRSKYEGTARYAAELAENPVINGGDGRHEHPTQAMIDLYTMYKIFGGIDGLTIGILGDLKYARTITSFLYGLTRFKPRKVYLISPGILRLREEVRNKIAELGLSFEETTSLQDVIDELDVLYVTRIQKERYPDPIEYERVKNLYRISIDTLRNVKKEFRILHPLPKIDEIDYRVDETPYAAYFYQAKLGVPLRMALLSLVLGVWRG.

Residues arginine 57 and threonine 58 each contribute to the carbamoyl phosphate site. Residue lysine 86 participates in L-aspartate binding. Carbamoyl phosphate contacts are provided by arginine 107, histidine 135, and glutamine 138. Residues arginine 168 and arginine 230 each coordinate L-aspartate. The carbamoyl phosphate site is built by leucine 269 and proline 270.

Belongs to the aspartate/ornithine carbamoyltransferase superfamily. ATCase family. In terms of assembly, heterooligomer of catalytic and regulatory chains.

It carries out the reaction carbamoyl phosphate + L-aspartate = N-carbamoyl-L-aspartate + phosphate + H(+). The protein operates within pyrimidine metabolism; UMP biosynthesis via de novo pathway; (S)-dihydroorotate from bicarbonate: step 2/3. Catalyzes the condensation of carbamoyl phosphate and aspartate to form carbamoyl aspartate and inorganic phosphate, the committed step in the de novo pyrimidine nucleotide biosynthesis pathway. The chain is Aspartate carbamoyltransferase catalytic subunit from Staphylothermus marinus (strain ATCC 43588 / DSM 3639 / JCM 9404 / F1).